The chain runs to 369 residues: Peptidyl-prolyl cis-trans isomerase D (369 aa).

Residues 7 to 175 enclose the PPIase cyclophilin-type domain; sequence YFDISCNGKP…EDWKIADCGE (169 aa). TPR repeat units follow at residues 217–250, 268–301, and 306–339; these read VSKIKDIGTKLLKEGKLEKSYEKYTKANSYLNDY, LSCYLNAALVALKLKHGKDAIAAANNALEVEQID, and TKALYRKGMGYILVKDEEQAQKILEEALELEPND.

This sequence belongs to the cyclophilin-type PPIase family. PPIase D subfamily.

The protein resides in the cytoplasm. It catalyses the reaction [protein]-peptidylproline (omega=180) = [protein]-peptidylproline (omega=0). Its function is as follows. PPIases accelerate the folding of proteins. It catalyzes the cis-trans isomerization of proline imidic peptide bonds in oligopeptides. The chain is Peptidyl-prolyl cis-trans isomerase D (CPR6) from Candida albicans (strain SC5314 / ATCC MYA-2876) (Yeast).